A 196-amino-acid chain; its full sequence is RNA polymerase II subunit B1 CTD phosphatase RTR2 (196 aa).

The segment at 52–123 adopts an RTR1-type zinc-finger fold; sequence YLARLLSPMS…LSQTPLHERR (72 aa). Residues Cys-75, Cys-80, Cys-99, and His-103 each coordinate Zn(2+).

This sequence belongs to the RPAP2 family.

It is found in the cytoplasm. It localises to the nucleus. It catalyses the reaction O-phospho-L-seryl-[protein] + H2O = L-seryl-[protein] + phosphate. It carries out the reaction O-phospho-L-threonyl-[protein] + H2O = L-threonyl-[protein] + phosphate. Probable RNA polymerase II subunit B1 C-terminal domain (CTD) phosphatase that regulates RNA polymerase II transcription. May have functional redundancy with RTR1. This is RNA polymerase II subunit B1 CTD phosphatase RTR2 (RTR2) from Saccharomyces cerevisiae (strain ATCC 204508 / S288c) (Baker's yeast).